A 352-amino-acid chain; its full sequence is MSQKILFIDRDGTLIEEPKSDFQIDTLEKLRFEKDAIPTLLKLKNFGFKFVMVSNQDGLGTPSFPKENFEIAHEKMLDILKSCGIEFQDIFICPHFENENCACRKPKTAMLEEYIKHELYDKEQSFVIGDRESDMILASNLGVRGLRYGELSWKEIENEILSSFRSASYQRTTKETDIKVKVCLNGGKISIKTGIDFFDHMLEQIAVHGGIGLEISCKGDLEIDEHHSVEDVALALGACIKKALGDKIGIARYGFALPMDECLASCAMDFCNRPHLVYKAKFKKSHLGALSTEMIEHFFYSLSYAMGVSLHLKVKGKNDHHKAEGLFKAFAKALKMAVKIESENLASSKGVI.

Positions 1-164 are histidinol-phosphatase; the sequence is MSQKILFIDR…EIENEILSSF (164 aa). Catalysis depends on D9, which acts as the Nucleophile. Mg(2+)-binding residues include D9 and D11. The active-site Proton donor is the D11. Residues C93, H95, C101, and C103 each contribute to the Zn(2+) site. D130 serves as a coordination point for Mg(2+). The imidazoleglycerol-phosphate dehydratase stretch occupies residues 165-352; sequence RSASYQRTTK…ENLASSKGVI (188 aa).

In the N-terminal section; belongs to the histidinol-phosphatase family. The protein in the C-terminal section; belongs to the imidazoleglycerol-phosphate dehydratase family. The cofactor is Mg(2+). It depends on Zn(2+) as a cofactor.

It is found in the cytoplasm. It carries out the reaction D-erythro-1-(imidazol-4-yl)glycerol 3-phosphate = 3-(imidazol-4-yl)-2-oxopropyl phosphate + H2O. It catalyses the reaction L-histidinol phosphate + H2O = L-histidinol + phosphate. It functions in the pathway amino-acid biosynthesis; L-histidine biosynthesis; L-histidine from 5-phospho-alpha-D-ribose 1-diphosphate: step 6/9. Its pathway is amino-acid biosynthesis; L-histidine biosynthesis; L-histidine from 5-phospho-alpha-D-ribose 1-diphosphate: step 8/9. The polypeptide is Histidine biosynthesis bifunctional protein HisB (Campylobacter jejuni subsp. jejuni serotype O:23/36 (strain 81-176)).